A 734-amino-acid polypeptide reads, in one-letter code: PI-PLC X-box domain-containing protein DDB_G0293730 (734 aa).

Residues 8–70 (IKNILLKIEK…ELNEKLIVEK (63 aa)) are a coiled coil. Positions 440 to 604 (KLKDRKVRNL…CIYDDLVNPL (165 aa)) constitute a PI-PLC X-box domain.

The protein is PI-PLC X-box domain-containing protein DDB_G0293730 of Dictyostelium discoideum (Social amoeba).